A 199-amino-acid polypeptide reads, in one-letter code: Proteasome subunit beta type-2-B (199 aa).

An N-acetylmethionine modification is found at Met1.

It belongs to the peptidase T1B family. As to quaternary structure, component of the 20S core complex of the 26S proteasome. The 26S proteasome is composed of a core protease (CP), known as the 20S proteasome, capped at one or both ends by the 19S regulatory particle (RP/PA700). The 20S proteasome core is composed of 28 subunits that are arranged in four stacked rings, resulting in a barrel-shaped structure. The two end rings are each formed by seven alpha subunits, and the two central rings are each formed by seven beta subunits. The catalytic chamber with the active sites is on the inside of the barrel. In terms of tissue distribution, ubiquitous low levels, higher expression in siliques and flowers.

It localises to the cytoplasm. The protein resides in the nucleus. Functionally, non-catalytic component of the proteasome, a multicatalytic proteinase complex which is characterized by its ability to cleave peptides with Arg, Phe, Tyr, Leu, and Glu adjacent to the leaving group at neutral or slightly basic pH. The proteasome has an ATP-dependent proteolytic activity. This chain is Proteasome subunit beta type-2-B (PBD2), found in Arabidopsis thaliana (Mouse-ear cress).